A 393-amino-acid polypeptide reads, in one-letter code: Formate-dependent phosphoribosylglycinamide formyltransferase (393 aa).

N(1)-(5-phospho-beta-D-ribosyl)glycinamide contacts are provided by residues 22 to 23 (EL) and glutamate 82. Residues arginine 114, lysine 155, 160-165 (SSGHGQ), 195-198 (EGFI), and glutamate 203 each bind ATP. The 190-residue stretch at 119–308 (RLAAEELGLK…QFALHARAIL (190 aa)) folds into the ATP-grasp domain. Positions 267 and 279 each coordinate Mg(2+). Residues aspartate 286, lysine 356, and 363–364 (RR) each bind N(1)-(5-phospho-beta-D-ribosyl)glycinamide.

Belongs to the PurK/PurT family. In terms of assembly, homodimer.

It carries out the reaction N(1)-(5-phospho-beta-D-ribosyl)glycinamide + formate + ATP = N(2)-formyl-N(1)-(5-phospho-beta-D-ribosyl)glycinamide + ADP + phosphate + H(+). Its pathway is purine metabolism; IMP biosynthesis via de novo pathway; N(2)-formyl-N(1)-(5-phospho-D-ribosyl)glycinamide from N(1)-(5-phospho-D-ribosyl)glycinamide (formate route): step 1/1. In terms of biological role, involved in the de novo purine biosynthesis. Catalyzes the transfer of formate to 5-phospho-ribosyl-glycinamide (GAR), producing 5-phospho-ribosyl-N-formylglycinamide (FGAR). Formate is provided by PurU via hydrolysis of 10-formyl-tetrahydrofolate. The sequence is that of Formate-dependent phosphoribosylglycinamide formyltransferase from Actinobacillus pleuropneumoniae serotype 5b (strain L20).